The primary structure comprises 264 residues: MVWLPRVPCVAAVILLLTVLSPPVALVRDTRPRFLEYVTSECHFYNGTQHVRFLERFIYNREENLRFDSDVGEYRAVTELGRPDAENWNSQPEILEDARASVDTYCRHNYEISDKFLVRRRVEPTVTVYPTKTQPLEHHNLLVCSVSDFYPGNIEVRWFRNGKEEETGIVSTGLVRNGDWTFQTLVMLETVPQSGEVYTCQVEHPSLTDPVTVEWKAQSTSAQNKMLSGVGGFVLGLLFLGAGLFIYFRNQKGQSGLQPTGLLS.

Residues 1-31 (MVWLPRVPCVAAVILLLTVLSPPVALVRDTR) form the signal peptide. A beta-1 region spans residues 32-121 (PRFLEYVTSE…ISDKFLVRRR (90 aa)). Over 32 to 225 (PRFLEYVTSE…KAQSTSAQNK (194 aa)) the chain is Extracellular. 2 cysteine pairs are disulfide-bonded: Cys42/Cys106 and Cys144/Cys200. N-linked (GlcNAc...) asparagine glycosylation occurs at Asn46. Residues 122–215 (VEPTVTVYPT…SLTDPVTVEW (94 aa)) form a beta-2 region. Residues 124–214 (PTVTVYPTKT…PSLTDPVTVE (91 aa)) form the Ig-like C1-type domain. Residues 216 to 225 (KAQSTSAQNK) are connecting peptide. A helical membrane pass occupies residues 226 to 248 (MLSGVGGFVLGLLFLGAGLFIYF). The Cytoplasmic segment spans residues 249 to 264 (RNQKGQSGLQPTGLLS).

Belongs to the MHC class II family.

The protein resides in the membrane. This is H-2 class II histocompatibility antigen, E-D beta chain from Mus musculus (Mouse).